A 49-amino-acid polypeptide reads, in one-letter code: Large ribosomal subunit protein eL40 (49 aa).

The protein belongs to the eukaryotic ribosomal protein eL40 family.

The protein is Large ribosomal subunit protein eL40 of Methanococcoides burtonii (strain DSM 6242 / NBRC 107633 / OCM 468 / ACE-M).